The following is a 233-amino-acid chain: Pre-mRNA-splicing factor syf-2 (233 aa).

The segment covering 1–16 (MSDSEQTSSGTASSGS) has biased composition (polar residues). Disordered stretches follow at residues 1 to 80 (MSDS…EDKG) and 95 to 119 (VTEKLEQKRKRKKNPDQGFASYEDM). Over residues 17–80 (KMKDFNQRFR…QDRKEAEDKG (64 aa)) the composition is skewed to basic and acidic residues. Residues 18–77 (MKDFNQRFRDLHKMRQKARKENHAQVVEEDRRKKLPKNFEAKKERDQWQVKELQDRKEAE) adopt a coiled-coil conformation.

It belongs to the SYF2 family. In terms of assembly, may be part of a spliceosome complex.

The protein localises to the nucleus. In terms of biological role, may be involved in pre-mRNA splicing. This chain is Pre-mRNA-splicing factor syf-2, found in Caenorhabditis briggsae.